We begin with the raw amino-acid sequence, 469 residues long: Mitochondrial adenyl nucleotide antiporter SLC25A25 (469 aa).

The interval 1–165 is regulatory N-terminal domain; sequence MLCLCLYVPI…LYWKHSTIFD (165 aa). Residues 1-189 lie on the Mitochondrial intermembrane side of the membrane; that stretch reads MLCLCLYVPI…ERQTGMWWRH (189 aa). EF-hand domains follow at residues 47-80, 78-113, and 114-149; these read TYRQ…QDHE, DHEK…LGVK, and ISEQ…HPVE. Ca(2+)-binding residues include D60, D62, D64, Q66, and E71. Residues 151–160 form a linker region region; that stretch reads IPEIILYWKH. The tract at residues 166-469 is C-terminal transmembrane transporter domain; the sequence is VGENLTVPDE…LKITLGVQSR (304 aa). Solcar repeat units follow at residues 184-270, 278-363, and 375-463; these read GMWW…MKRL, LRIH…LKNT, and PGVF…LKIT. A helical membrane pass occupies residues 190–207; sequence LVAGGGAGAVSRTCTAPL. Over 208–244 the chain is Mitochondrial matrix; it reads DRLKVLMQVHASRSNNMCIIGGFTQMIREGGAKSLWR. Residues 245-264 form a helical membrane-spanning segment; the sequence is GNGINVLKIAPESAIKFMAY. The Mitochondrial intermembrane portion of the chain corresponds to 265 to 287; it reads EQMKRLVGSDQETLRIHERLVAG. The helical transmembrane segment at 288–301 threads the bilayer; sequence SLAGAIAQSSIYPM. The Mitochondrial matrix portion of the chain corresponds to 302-337; the sequence is EVLKTRMALRKTGQYSGMLDCAKRILAKEGVAAFYK. Residues 338 to 357 form a helical membrane-spanning segment; the sequence is GYIPNMLGIIPYAGIDLAVY. The Mitochondrial intermembrane portion of the chain corresponds to 358-380; that stretch reads ETLKNTWLQRYAVNSADPGVFVL. The helical transmembrane segment at 381-398 threads the bilayer; it reads LACGTISSTCGQLASYPL. Over 399 to 437 the chain is Mitochondrial matrix; that stretch reads ALVRTRMQAQASIEGAPEVTMSSLFKQILRTEGAFGLYR. Residues 438-457 traverse the membrane as a helical segment; sequence GLAPNFMKVIPAVSISYVVY. Residues 458 to 469 are Mitochondrial intermembrane-facing; it reads ENLKITLGVQSR.

The protein belongs to the mitochondrial carrier (TC 2.A.29) family. Mainly present in the liver and the skeletal muscle (at protein level).

The protein localises to the mitochondrion inner membrane. The catalysed reaction is Mg(2+)(out) + phosphate(in) + ATP(out) = Mg(2+)(in) + phosphate(out) + ATP(in). Activated by an increase in cytosolic calcium levels that induce a conformational change of the N-terminal regulatory domain, uncapping the channel and allowing transport. Its function is as follows. Electroneutral antiporter that most probably mediates the transport of adenyl nucleotides through the inner mitochondrial membrane. Originally identified as an ATP-magnesium/inorganic phosphate antiporter, it could have a broader specificity for adenyl nucleotides. By regulating the mitochondrial matrix adenyl nucleotide pool could adapt to changing cellular energetic demands and indirectly regulate adenyl nucleotide-dependent metabolic pathways. The chain is Mitochondrial adenyl nucleotide antiporter SLC25A25 from Rattus norvegicus (Rat).